A 500-amino-acid polypeptide reads, in one-letter code: Cytochrome P450 2D14 (500 aa).

Cys446 lines the heme pocket.

This sequence belongs to the cytochrome P450 family. The cofactor is heme.

It localises to the endoplasmic reticulum membrane. Its subcellular location is the microsome membrane. It catalyses the reaction an organic molecule + reduced [NADPH--hemoprotein reductase] + O2 = an alcohol + oxidized [NADPH--hemoprotein reductase] + H2O + H(+). Functionally, cytochromes P450 are a group of heme-thiolate monooxygenases. In liver microsomes, this enzyme is involved in an NADPH-dependent electron transport pathway. It oxidizes a variety of structurally unrelated compounds, including steroids, fatty acids, and xenobiotics. In Bos taurus (Bovine), this protein is Cytochrome P450 2D14 (CYP2D14).